Reading from the N-terminus, the 299-residue chain is Acetylglutamate kinase (299 aa).

Residues 72 to 73 (GG), R94, and N196 contribute to the substrate site.

It belongs to the acetylglutamate kinase family. ArgB subfamily.

It localises to the cytoplasm. The enzyme catalyses N-acetyl-L-glutamate + ATP = N-acetyl-L-glutamyl 5-phosphate + ADP. It functions in the pathway amino-acid biosynthesis; L-arginine biosynthesis; N(2)-acetyl-L-ornithine from L-glutamate: step 2/4. In terms of biological role, catalyzes the ATP-dependent phosphorylation of N-acetyl-L-glutamate. This chain is Acetylglutamate kinase, found in Burkholderia mallei (strain NCTC 10247).